The following is a 350-amino-acid chain: Flap endonuclease 1 (350 aa).

Residues 1–101 (MGVNIREVIP…LEIERRKRVK (101 aa)) form an N-domain region. 7 residues coordinate Mg(2+): Asp-30, Asp-83, Glu-155, Glu-157, Asp-176, Asp-178, and Asp-239. An I-domain region spans residues 119-261 (AARRYAQMAA…TALKMVKAHR (143 aa)). The interval 340-348 (QQMGLDAWL) is interaction with PCNA.

It belongs to the XPG/RAD2 endonuclease family. FEN1 subfamily. As to quaternary structure, interacts with PCNA. PCNA stimulates the nuclease activity without altering cleavage specificity. Mg(2+) is required as a cofactor.

Structure-specific nuclease with 5'-flap endonuclease and 5'-3' exonuclease activities involved in DNA replication and repair. During DNA replication, cleaves the 5'-overhanging flap structure that is generated by displacement synthesis when DNA polymerase encounters the 5'-end of a downstream Okazaki fragment. Binds the unpaired 3'-DNA end and kinks the DNA to facilitate 5' cleavage specificity. Cleaves one nucleotide into the double-stranded DNA from the junction in flap DNA, leaving a nick for ligation. Also involved in the base excision repair (BER) pathway. Acts as a genome stabilization factor that prevents flaps from equilibrating into structures that lead to duplications and deletions. Also possesses 5'-3' exonuclease activity on nicked or gapped double-stranded DNA. The protein is Flap endonuclease 1 of Hyperthermus butylicus (strain DSM 5456 / JCM 9403 / PLM1-5).